Reading from the N-terminus, the 89-residue chain is uncharacterized protein (89 aa).

This is an uncharacterized protein from Saccharomyces cerevisiae (strain ATCC 204508 / S288c) (Baker's yeast).